The following is a 251-amino-acid chain: Probable transcriptional regulatory protein cu0933 (251 aa).

The interval 56–79 is disordered; the sequence is AKKSSVPNDNIERARKRGSGEEAG.

The protein belongs to the TACO1 family.

It localises to the cytoplasm. This is Probable transcriptional regulatory protein cu0933 from Corynebacterium urealyticum (strain ATCC 43042 / DSM 7109).